A 369-amino-acid chain; its full sequence is 2-aminoethylphosphonate--pyruvate transaminase (369 aa).

An N6-(pyridoxal phosphate)lysine modification is found at Lys-193.

It belongs to the class-V pyridoxal-phosphate-dependent aminotransferase family. PhnW subfamily. Homodimer. The cofactor is pyridoxal 5'-phosphate.

It carries out the reaction (2-aminoethyl)phosphonate + pyruvate = phosphonoacetaldehyde + L-alanine. In terms of biological role, involved in phosphonate degradation. This is 2-aminoethylphosphonate--pyruvate transaminase from Pseudomonas fluorescens (strain Pf0-1).